The following is a 735-amino-acid chain: Putative RNA polymerase II subunit B1 CTD phosphatase RPAP2 homolog (735 aa).

An RTR1-type zinc finger spans residues 33–118; sequence AARKLMSRSD…LQEARTLEFD (86 aa). Cysteine 56, cysteine 61, cysteine 94, and cysteine 98 together coordinate Zn(2+). 3 disordered regions span residues 179-201, 349-374, and 519-538; these read VPFD…QEKH, GKNT…KSRK, and EHSE…WPNK. Residues 349–364 are compositionally biased toward low complexity; that stretch reads GKNTLSGSSSGSNTKG. Residues 519–530 show a composition bias toward acidic residues; sequence EHSEEEMTEEEP.

The protein belongs to the RPAP2 family.

It localises to the nucleus. It carries out the reaction O-phospho-L-seryl-[protein] + H2O = L-seryl-[protein] + phosphate. It catalyses the reaction O-phospho-L-threonyl-[protein] + H2O = L-threonyl-[protein] + phosphate. In terms of biological role, putative RNA polymerase II subunit B1 C-terminal domain (CTD) phosphatase involved in RNA polymerase II transcription regulation. This is Putative RNA polymerase II subunit B1 CTD phosphatase RPAP2 homolog from Arabidopsis thaliana (Mouse-ear cress).